The primary structure comprises 160 residues: Ribosomal RNA large subunit methyltransferase H (160 aa).

Residues L76, G108, and 127 to 132 each bind S-adenosyl-L-methionine; that span reads LGKLTW.

It belongs to the RNA methyltransferase RlmH family. In terms of assembly, homodimer.

The protein resides in the cytoplasm. It catalyses the reaction pseudouridine(1915) in 23S rRNA + S-adenosyl-L-methionine = N(3)-methylpseudouridine(1915) in 23S rRNA + S-adenosyl-L-homocysteine + H(+). Its function is as follows. Specifically methylates the pseudouridine at position 1915 (m3Psi1915) in 23S rRNA. The sequence is that of Ribosomal RNA large subunit methyltransferase H from Agrobacterium fabrum (strain C58 / ATCC 33970) (Agrobacterium tumefaciens (strain C58)).